Reading from the N-terminus, the 188-residue chain is ADP-ribosylation factor K (188 aa).

Residues 34–40 (DGAGKST), 75–79 (DVGGQ), and 134–137 (NKQD) each bind GTP.

Belongs to the small GTPase superfamily. Arf family.

The protein resides in the golgi apparatus. Its function is as follows. GTP-binding protein that may be involved in protein trafficking. May modulate vesicle budding and uncoating within the Golgi apparatus. The sequence is that of ADP-ribosylation factor K (arrK) from Dictyostelium discoideum (Social amoeba).